We begin with the raw amino-acid sequence, 701 residues long: CRS2-associated factor 1, chloroplastic (701 aa).

The transit peptide at 1–77 directs the protein to the chloroplast; it reads MATSHLTSRS…ENGEPAAGVR (77 aa). CRM domains follow at residues 183 to 279 and 301 to 397; these read EPLT…TRPI and DGLT…LPPL. Residues 581 to 603 form a CRS2 binding region; that stretch reads GILLLFKQAIDSGMALVLNENEF.

As to quaternary structure, interacts with CRS2 and RNA. Part of large ribonucleo-protein complexes that include group IIB introns, CRS2 and CAF1.

The protein localises to the plastid. Its subcellular location is the chloroplast stroma. Its function is as follows. Required for the splicing of group IIB introns in chloroplasts. Forms splicing particles with CRS2. Interacts with RNA and confers intron specificity of the splicing particles. This Oryza sativa subsp. japonica (Rice) protein is CRS2-associated factor 1, chloroplastic.